Consider the following 433-residue polypeptide: Trigger factor (433 aa).

The 86-residue stretch at 163 to 248 folds into the PPIase FKBP-type domain; the sequence is GDTVNIDFSG…VNEIKFKEVP (86 aa).

This sequence belongs to the FKBP-type PPIase family. Tig subfamily.

The protein resides in the cytoplasm. The catalysed reaction is [protein]-peptidylproline (omega=180) = [protein]-peptidylproline (omega=0). Its function is as follows. Involved in protein export. Acts as a chaperone by maintaining the newly synthesized protein in an open conformation. Functions as a peptidyl-prolyl cis-trans isomerase. This Staphylococcus aureus (strain COL) protein is Trigger factor.